The sequence spans 483 residues: MHHMTLAEIARGLADKKFSSEELTKTLLARIAEHDPKVNSFISLTEELALSQAKAADARRANGEQGALLGAPIAHKDLFCTQGIRTSCGSKMLDNFKAPYDATVVSKLAAAGAVTLGKTNMDEFAMGSANESSYYGAVKNPWNLDHVPGGSSGGSAAAVAARFLPAATATDTGGSIRQPAAFTNLTGLKPTYGRVSRWGMIAYASSLDQGGPLARTAEDCAILLQGMAGFDKQDSTSIDEPVPDYSASLNTSIKGLRIGVPKEYFSAGLDPRIAELVHNSVKTLEGLGAVIKEISLPNNQHAIPAYYVIAPAEASSNLSRFDGVRFGYRCENPKDLTDLYKRSRGEGFGAEVQRRIMVGAYALSAGYYDAYYLKAQKIRRLIKNDFMAAFEEVDVILGPTTPNPAWKIGAKTGDPIAEYLEDLYTITANLAGLPGLSMPAGFVDGLPVGVQLLAPYFQEGRLLNVAHQYQLNTDWHTRTPTGF.

Residues Lys-76 and Ser-151 each act as charge relay system in the active site. Catalysis depends on Ser-175, which acts as the Acyl-ester intermediate.

Belongs to the amidase family. GatA subfamily. As to quaternary structure, heterotrimer of A, B and C subunits.

The enzyme catalyses L-glutamyl-tRNA(Gln) + L-glutamine + ATP + H2O = L-glutaminyl-tRNA(Gln) + L-glutamate + ADP + phosphate + H(+). Functionally, allows the formation of correctly charged Gln-tRNA(Gln) through the transamidation of misacylated Glu-tRNA(Gln) in organisms which lack glutaminyl-tRNA synthetase. The reaction takes place in the presence of glutamine and ATP through an activated gamma-phospho-Glu-tRNA(Gln). The sequence is that of Glutamyl-tRNA(Gln) amidotransferase subunit A from Pseudomonas fluorescens (strain SBW25).